The sequence spans 164 residues: Crossover junction endodeoxyribonuclease RuvC (164 aa).

Catalysis depends on residues D7, E67, and D139. Residues D7, E67, and D139 each coordinate Mg(2+).

It belongs to the RuvC family. In terms of assembly, homodimer which binds Holliday junction (HJ) DNA. The HJ becomes 2-fold symmetrical on binding to RuvC with unstacked arms; it has a different conformation from HJ DNA in complex with RuvA. In the full resolvosome a probable DNA-RuvA(4)-RuvB(12)-RuvC(2) complex forms which resolves the HJ. Requires Mg(2+) as cofactor.

The protein localises to the cytoplasm. The catalysed reaction is Endonucleolytic cleavage at a junction such as a reciprocal single-stranded crossover between two homologous DNA duplexes (Holliday junction).. Functionally, the RuvA-RuvB-RuvC complex processes Holliday junction (HJ) DNA during genetic recombination and DNA repair. Endonuclease that resolves HJ intermediates. Cleaves cruciform DNA by making single-stranded nicks across the HJ at symmetrical positions within the homologous arms, yielding a 5'-phosphate and a 3'-hydroxyl group; requires a central core of homology in the junction. The consensus cleavage sequence is 5'-(A/T)TT(C/G)-3'. Cleavage occurs on the 3'-side of the TT dinucleotide at the point of strand exchange. HJ branch migration catalyzed by RuvA-RuvB allows RuvC to scan DNA until it finds its consensus sequence, where it cleaves and resolves the cruciform DNA. The chain is Crossover junction endodeoxyribonuclease RuvC from Citrifermentans bemidjiense (strain ATCC BAA-1014 / DSM 16622 / JCM 12645 / Bem) (Geobacter bemidjiensis).